We begin with the raw amino-acid sequence, 79 residues long: Submaxillary gland androgen-regulated protein 3B (79 aa).

Positions 1 to 22 (MKSLTWILGLWALAACFTPGES) are cleaved as a signal peptide. Residues 19–79 (PGESQRGPRG…GIFPPPPPQP (61 aa)) form a disordered region. Glutamine 23 carries the post-translational modification Pyrrolidone carboxylic acid. The span at 28–79 (GPYPPGPLAPPQPFGPGFVPPPPPPPYGPGRIPPPPPAPYGPGIFPPPPPQP) shows a compositional bias: pro residues.

This sequence belongs to the PROL1/PROL3 family. Post-translationally, P-A and D1A are probably degradation products of P-B. Secreted into saliva by submaxillary gland. Not expressed in heart, brain, lung, liver, skeletal muscle, Kidney, pancreas or placenta.

The protein resides in the secreted. This chain is Submaxillary gland androgen-regulated protein 3B (SMR3B), found in Homo sapiens (Human).